We begin with the raw amino-acid sequence, 534 residues long: Apolipoprotein N-acyltransferase (534 aa).

The next 7 membrane-spanning stretches (helical) occupy residues 18–38 (LLAI…GFFA), 39–59 (AMFL…ASPD), 74–94 (WLFG…ALLV), 105–125 (LAIL…VALA), 127–147 (IFWS…GLME), 178–198 (VIGA…PALA), and 209–229 (ALAV…LYVA). Residues 246 to 496 (VQPDIDQAAK…TGFIDATVDR (251 aa)) enclose the CN hydrolase domain. Glu-291 acts as the Proton acceptor in catalysis. The active site involves Lys-355. The active-site Nucleophile is the Cys-408. The chain crosses the membrane as a helical span at residues 504-524 (TFPRQTYFWLTEALLILIALV).

It belongs to the CN hydrolase family. Apolipoprotein N-acyltransferase subfamily.

The protein resides in the cell inner membrane. The catalysed reaction is N-terminal S-1,2-diacyl-sn-glyceryl-L-cysteinyl-[lipoprotein] + a glycerophospholipid = N-acyl-S-1,2-diacyl-sn-glyceryl-L-cysteinyl-[lipoprotein] + a 2-acyl-sn-glycero-3-phospholipid + H(+). It participates in protein modification; lipoprotein biosynthesis (N-acyl transfer). In terms of biological role, catalyzes the phospholipid dependent N-acylation of the N-terminal cysteine of apolipoprotein, the last step in lipoprotein maturation. The sequence is that of Apolipoprotein N-acyltransferase from Rhizobium leguminosarum bv. trifolii (strain WSM2304).